The following is a 210-amino-acid chain: Syntaxin-binding protein 6 (210 aa).

Serine 2 carries the post-translational modification N-acetylserine. A v-SNARE coiled-coil homology domain is found at 151-210 (GNSILHSAADSVTSAVQKASQALNERGERLGRAEEKTEDMKNSAQQFAETAHKLAMKHKC).

As to quaternary structure, part of a ternary complex containing SNAP25 and STX1A that can be dissociated by NAPA and NSF. Interacts with STX4A.

It localises to the cytoplasm. It is found in the membrane. Forms non-fusogenic complexes with SNAP25 and STX1A and may thereby modulate the formation of functional SNARE complexes and exocytosis. This Mus musculus (Mouse) protein is Syntaxin-binding protein 6 (Stxbp6).